A 358-amino-acid chain; its full sequence is Protein-glutamate methylesterase/protein-glutamine glutaminase (358 aa).

One can recognise a Response regulatory domain in the interval 5–122; that stretch reads SVLIIDDSAL…RNSLEAYTDE (118 aa). Asp56 is subject to 4-aspartylphosphate. The region spanning 159 to 351 is the CheB-type methylesterase domain; that stretch reads GISTEKLIII…RRILARLVGA (193 aa). Residues Ser171, His197, and Asp293 contribute to the active site.

It belongs to the CheB family. Post-translationally, phosphorylated by CheA. Phosphorylation of the N-terminal regulatory domain activates the methylesterase activity.

Its subcellular location is the cytoplasm. It carries out the reaction [protein]-L-glutamate 5-O-methyl ester + H2O = L-glutamyl-[protein] + methanol + H(+). It catalyses the reaction L-glutaminyl-[protein] + H2O = L-glutamyl-[protein] + NH4(+). Functionally, involved in chemotaxis. Part of a chemotaxis signal transduction system that modulates chemotaxis in response to various stimuli. Catalyzes the demethylation of specific methylglutamate residues introduced into the chemoreceptors (methyl-accepting chemotaxis proteins or MCP) by CheR. Also mediates the irreversible deamidation of specific glutamine residues to glutamic acid. This is Protein-glutamate methylesterase/protein-glutamine glutaminase from Nitrosomonas europaea (strain ATCC 19718 / CIP 103999 / KCTC 2705 / NBRC 14298).